The sequence spans 145 residues: MELVQVLKRGLQQITGHGGLRGYLRVFFRTNDAKVGTLVGEDKYGNKYYEDNKQFFGRHRWVVYTTEMNGKNTFWDVDGSMVPPEWHRWLHSMTDDPPTTKPLTARKFIWTNHKFNMTGTPEQYVPYSTTRKKIQEWIPPSTPYK.

Methionine 1 bears the N-acetylmethionine mark.

It belongs to the complex I NDUFA12 subunit family. Complex I is composed of 45 different subunits.

The protein localises to the mitochondrion inner membrane. In terms of biological role, accessory subunit of the mitochondrial membrane respiratory chain NADH dehydrogenase (Complex I), that is believed not to be involved in catalysis. Complex I functions in the transfer of electrons from NADH to the respiratory chain. The immediate electron acceptor for the enzyme is believed to be ubiquinone. This is NADH dehydrogenase [ubiquinone] 1 alpha subcomplex subunit 12 (NDUFA12) from Gorilla gorilla gorilla (Western lowland gorilla).